Reading from the N-terminus, the 541-residue chain is MSQLVECVPNFSEGNNQEVIDAISQAISQTPGCVLLDVDAGPSTNRTVYTFVGQPECVVEGALSAARTASQLIDMRKHKGEHPRMGALDVCPFIPVRGVSMDECVLCAKAFGQRLAEELNVPVYLYGEAAQMPSRQTLPAIRAGEYEALPEKLKQAEWVPDFGPSSFVPSWGATVTGARKFLIAFNINLLSTKEQAHRIALNLREQGRGKDQPGRLKKVQGIGWYLEEKNLAQVSTNLLDFEVTALHTVYEEARREAQELNLPVVGSQLVGLVPLKALLDAAAFYCDKEKLFVLEEEHRIRLVVNRLGLDSLAPFDPKERIIEYLVPDSGPEQSLLDASLRAFVREVGARSAAPGGGSVAAAVAALGAALASMVGQMTYGRRQFDHLDSTMRRLIPPFHAASAQLTSLVDADARAFAACLGAIKLPKNTPEERDRRTCALQEGLRQAVAVPLKLAETVSQLWPALQELAQCGNLSCLSDLQVAAKALETGVFGAYFNVLINLKDMTDDVFKEKTRHRISSLLQEAKTQAALVLGSLEARKE.

The segment at 1–181 (MSQLVECVPN…GATVTGARKF (181 aa)) is formiminotransferase N-subdomain. Histidine 82 acts as the For formimidoyltransferase activity in catalysis. 163-172 (GPSSFVPSWG) is a binding site for folate. Positions 182–326 (LIAFNINLLS…PKERIIEYLV (145 aa)) are formiminotransferase C-subdomain. The tract at residues 327–334 (PDSGPEQS) is linker. Residues 335–541 (LLDASLRAFV…VLGSLEARKE (207 aa)) are cyclodeaminase/cyclohydrolase. Aspartate 412 (for cyclodeaminase activity) is an active-site residue. Serine 520 carries the post-translational modification Phosphoserine.

The protein in the C-terminal section; belongs to the cyclodeaminase/cyclohydrolase family. In the N-terminal section; belongs to the formiminotransferase family. Homooctamer, including four polyglutamate binding sites. The subunits are arranged as a tetramer of dimers, and form a planar ring-shaped structure. As to expression, specifically expressed in liver (at protein level).

The protein localises to the cytoplasm. It is found in the cytosol. It localises to the golgi apparatus. Its subcellular location is the cytoskeleton. The protein resides in the microtubule organizing center. The protein localises to the centrosome. It is found in the centriole. It catalyses the reaction 5-formimidoyltetrahydrofolate + L-glutamate = N-formimidoyl-L-glutamate + (6S)-5,6,7,8-tetrahydrofolate. The catalysed reaction is 5-formimidoyltetrahydrofolate + 2 H(+) = (6R)-5,10-methenyltetrahydrofolate + NH4(+). It participates in amino-acid degradation; L-histidine degradation into L-glutamate; L-glutamate from N-formimidoyl-L-glutamate (transferase route): step 1/1. Its function is as follows. Folate-dependent enzyme, that displays both transferase and deaminase activity. Serves to channel one-carbon units from formiminoglutamate to the folate pool. In terms of biological role, binds and promotes bundling of vimentin filaments originating from the Golgi. The protein is Formimidoyltransferase-cyclodeaminase (Ftcd) of Rattus norvegicus (Rat).